We begin with the raw amino-acid sequence, 176 residues long: Large ribosomal subunit protein uL10 (176 aa).

This sequence belongs to the universal ribosomal protein uL10 family. In terms of assembly, part of the ribosomal stalk of the 50S ribosomal subunit. The N-terminus interacts with L11 and the large rRNA to form the base of the stalk. The C-terminus forms an elongated spine to which L12 dimers bind in a sequential fashion forming a multimeric L10(L12)X complex.

In terms of biological role, forms part of the ribosomal stalk, playing a central role in the interaction of the ribosome with GTP-bound translation factors. This is Large ribosomal subunit protein uL10 from Leuconostoc citreum (strain KM20).